The sequence spans 1368 residues: MQYSFTEKKRIRKSFAKRSIVHQVPFLLATQLESFSTFLQADVPTAQRKSEGLQAAFTSVFPIVSHNGFARLEFVSYALSSPAFNIKECQQRGLTYCSALRAKVRLVLLDKESPSKPVVKEVKEQEVYMGEIPLMTPTGSFVINGTERVIVSQLHRSPGVFFEHDKGKTHSSGKLLFSARIIPYRGSWLDFEFDPKDVLYFRVDRRRKMPVTILLKAIGLTPEQILANFFVFDNFTLMDEGAQMEFVPERLRGEVARFDITDREGKVIVQKDKRINAKHIRDLEAAKTKYISVPEDYLLGRVLAKNVVDGDTGEVIANANDEITEGVLEKLREAKIKEIQTLYTNDLDQGPYISSTLRVDETVDKTAARIAIYRMMRPGEPPTEEAVEALFNRLFYSEDAYDLSKVGRMKFNRRVGRDEITGPMTLQDDDILATIKILVELRNGKGEVDDIDHLGNRRVRCVGELAENQFRAGLVRVERAVKERLGQAESENLMPHDLINSKPISSAIREFFGSSQLSQFMDQTNPLSEITHKRRVSALGPGGLTRERAGFEVRDVHPTHYGRVCPIETPEGPNIGLINSLALYAHLNEYGFLETPYRKVVDSKVTDQIDYLSAIEEGRYMIAQANAAIGDDGALVDELVSSREAGETMMVTPDRIQYMDVAPSQIVSVAASLIPFLEHDDANRALMGSNMQRQAVPCLRPEKPVVGTGIERTVAVDSGTTVQALRGGVVDYVDAGRIVIRVNDDEAVAGEVGVDIYNLIKYTRSNQNTNINQRPIVKMGDKVSRGDVLADGASTDLGELALGQNMLIAFMPWNGYNFEDSILISERVVADDRYTSIHIEELNVVARDTKLGPEEITRDISNLAEVQLGRLDESGIVYIGAEVEAGDVLVGKVTPKGETQLTPEEKLLRAIFGEKASDVKDTSLRVPSGMSGTVIDVQVFTREGIQRDKRAQQIIDDELKRYRLDLNDQLRIVEGDAFQRLARMLVGKVANGGPKKLAKGTKIDQAYLEDLDHYHWFDIRLADDEAAVQLEAIKNSIEEKRHQFDLAFEEKRKKLTQGDELPPGVLKMVKVYLAVKRRLQPGDKMAGRHGNKGVVSKIVPVEDMPYMADGRPADVVLNPLGVPSRMNVGQVLEVHLGWAAKGLGWRIGEMLARQTKIEELRVFLTKIYNESGRAEDLESFSDDEILELAKNLREGVPFATPVFDGATEEEMSKMLDLAFPDDIAEQLDMNPSKNQVRLYDGRTGEPFERRVTVGYMHYLKLHHLVDDKMHARSTGPYSLVTQQPLGGKAQFGGQRFGEMEVWALEAYGASYVLQEMLTVKSDDVTGRTKVYENLVKGDHVIDAGMPESFNVLVKEIRSLGIDIDLDRN.

It belongs to the RNA polymerase beta chain family. As to quaternary structure, the RNAP catalytic core consists of 2 alpha, 1 beta, 1 beta' and 1 omega subunit. When a sigma factor is associated with the core the holoenzyme is formed, which can initiate transcription.

The enzyme catalyses RNA(n) + a ribonucleoside 5'-triphosphate = RNA(n+1) + diphosphate. In terms of biological role, DNA-dependent RNA polymerase catalyzes the transcription of DNA into RNA using the four ribonucleoside triphosphates as substrates. This is DNA-directed RNA polymerase subunit beta from Burkholderia pseudomallei (strain K96243).